The primary structure comprises 258 residues: Phosphate import ATP-binding protein PstB (258 aa).

One can recognise an ABC transporter domain in the interval 12-253 (LEVKNLNFYY…PARKETEDYI (242 aa)). 44-51 (GPSGCGKS) serves as a coordination point for ATP.

The protein belongs to the ABC transporter superfamily. Phosphate importer (TC 3.A.1.7) family. In terms of assembly, the complex is composed of two ATP-binding proteins (PstB), two transmembrane proteins (PstC and PstA) and a solute-binding protein (PstS).

It is found in the cell inner membrane. It catalyses the reaction phosphate(out) + ATP + H2O = ADP + 2 phosphate(in) + H(+). In terms of biological role, part of the ABC transporter complex PstSACB involved in phosphate import. Responsible for energy coupling to the transport system. The protein is Phosphate import ATP-binding protein PstB of Bordetella parapertussis (strain 12822 / ATCC BAA-587 / NCTC 13253).